Consider the following 477-residue polypeptide: Glutamate--tRNA ligase (477 aa).

The 'HIGH' region signature appears at 8-18; sequence PSPTGTLHIGT. Residues 247–251 carry the 'KMSKS' region motif; it reads KLSKR. Lysine 250 is an ATP binding site.

Belongs to the class-I aminoacyl-tRNA synthetase family. Glutamate--tRNA ligase type 1 subfamily. Monomer.

Its subcellular location is the cytoplasm. It catalyses the reaction tRNA(Glu) + L-glutamate + ATP = L-glutamyl-tRNA(Glu) + AMP + diphosphate. Functionally, catalyzes the attachment of glutamate to tRNA(Glu) in a two-step reaction: glutamate is first activated by ATP to form Glu-AMP and then transferred to the acceptor end of tRNA(Glu). The polypeptide is Glutamate--tRNA ligase (Parasynechococcus marenigrum (strain WH8102)).